The primary structure comprises 248 residues: Glutamine-binding periplasmic protein (248 aa).

The first 22 residues, 1–22, serve as a signal peptide directing secretion; that stretch reads MKSVLKVSLAALTLAFAVSSHA.

Belongs to the bacterial solute-binding protein 3 family.

It localises to the periplasm. Its function is as follows. Involved in a glutamine-transport system GlnHPQ. The sequence is that of Glutamine-binding periplasmic protein (glnH) from Escherichia coli O157:H7.